Here is a 354-residue protein sequence, read N- to C-terminus: Holliday junction branch migration complex subunit RuvB (354 aa).

The disordered stretch occupies residues 1–38; that stretch reads MSDFERTEFELPPGVGHSQNEDLNPQQTAGDSDIDTSL. Residues 2–199 form a large ATPase domain (RuvB-L) region; sequence SDFERTEFEL…FGFTAQMEFY (198 aa). Polar residues predominate over residues 17–30; it reads HSQNEDLNPQQTAG. Residues Leu38, Arg39, Gly80, Lys83, Thr84, Thr85, 146–148, Arg189, Tyr199, and Arg236 each bind ATP; that span reads EDF. Thr84 is a binding site for Mg(2+). Positions 200 to 270 are small ATPAse domain (RuvB-S); that stretch reads DTADLTRVVT…VARAALLVFD (71 aa). The head domain (RuvB-H) stretch occupies residues 273-354; the sequence is ESGLDRLDRA…LEPPEGTIGL (82 aa). Arg328 and Arg333 together coordinate DNA.

Belongs to the RuvB family. As to quaternary structure, homohexamer. Forms an RuvA(8)-RuvB(12)-Holliday junction (HJ) complex. HJ DNA is sandwiched between 2 RuvA tetramers; dsDNA enters through RuvA and exits via RuvB. An RuvB hexamer assembles on each DNA strand where it exits the tetramer. Each RuvB hexamer is contacted by two RuvA subunits (via domain III) on 2 adjacent RuvB subunits; this complex drives branch migration. In the full resolvosome a probable DNA-RuvA(4)-RuvB(12)-RuvC(2) complex forms which resolves the HJ.

It localises to the cytoplasm. The catalysed reaction is ATP + H2O = ADP + phosphate + H(+). Its function is as follows. The RuvA-RuvB-RuvC complex processes Holliday junction (HJ) DNA during genetic recombination and DNA repair, while the RuvA-RuvB complex plays an important role in the rescue of blocked DNA replication forks via replication fork reversal (RFR). RuvA specifically binds to HJ cruciform DNA, conferring on it an open structure. The RuvB hexamer acts as an ATP-dependent pump, pulling dsDNA into and through the RuvAB complex. RuvB forms 2 homohexamers on either side of HJ DNA bound by 1 or 2 RuvA tetramers; 4 subunits per hexamer contact DNA at a time. Coordinated motions by a converter formed by DNA-disengaged RuvB subunits stimulates ATP hydrolysis and nucleotide exchange. Immobilization of the converter enables RuvB to convert the ATP-contained energy into a lever motion, pulling 2 nucleotides of DNA out of the RuvA tetramer per ATP hydrolyzed, thus driving DNA branch migration. The RuvB motors rotate together with the DNA substrate, which together with the progressing nucleotide cycle form the mechanistic basis for DNA recombination by continuous HJ branch migration. Branch migration allows RuvC to scan DNA until it finds its consensus sequence, where it cleaves and resolves cruciform DNA. The polypeptide is Holliday junction branch migration complex subunit RuvB (Corynebacterium jeikeium (strain K411)).